Reading from the N-terminus, the 797-residue chain is Inactive dipeptidyl peptidase 10 (797 aa).

Positions 1-28 (MKQEQQPTPGARATQSQPADQELGSNSP) are disordered. At 1 to 34 (MKQEQQPTPGARATQSQPADQELGSNSPPQRNWK) the chain is on the cytoplasmic side. The helical; Signal-anchor for type II membrane protein transmembrane segment at 35 to 55 (GIAIALLVILVVCSLITMSVI) threads the bilayer. At 56 to 797 (LLTPDELTNS…VLPQEPEEDE (742 aa)) the chain is on the extracellular side. Asn-64, Asn-91, Asn-112, and Asn-120 each carry an N-linked (GlcNAc...) asparagine glycan. Phosphotyrosine occurs at positions 139 and 144. Residues Asn-258, Asn-343, Asn-518, and Asn-749 are each glycosylated (N-linked (GlcNAc...) asparagine).

It belongs to the peptidase S9B family. DPPIV subfamily. May form oligomers. Interacts with KCND1 and KCND2. Post-translationally, N-glycosylation is important for cell surface expression, specially at Asn-258, which is crucial. Detected in brain cortex (at protein level). Expressed in the brain, predominantly by neurons and not by glia.

It localises to the cell membrane. Promotes cell surface expression of the potassium channel KCND2. Modulates the activity and gating characteristics of the potassium channel KCND2. Has no dipeptidyl aminopeptidase activity. This chain is Inactive dipeptidyl peptidase 10 (Dpp10), found in Mus musculus (Mouse).